A 132-amino-acid polypeptide reads, in one-letter code: UPF0146 protein PF0123 (132 aa).

It belongs to the UPF0146 family.

The polypeptide is UPF0146 protein PF0123 (Pyrococcus furiosus (strain ATCC 43587 / DSM 3638 / JCM 8422 / Vc1)).